The sequence spans 385 residues: 1-deoxy-D-xylulose 5-phosphate reductoisomerase (385 aa).

The NADPH site is built by Thr-10, Gly-11, Ser-12, Ile-13, Gly-36, Asn-38, and Asn-121. Lys-122 provides a ligand contact to 1-deoxy-D-xylulose 5-phosphate. Glu-123 is a binding site for NADPH. Mn(2+) is bound at residue Asp-147. Ser-148, Glu-149, Ser-173, and His-196 together coordinate 1-deoxy-D-xylulose 5-phosphate. Residue Glu-149 participates in Mn(2+) binding. Residue Gly-202 participates in NADPH binding. The 1-deoxy-D-xylulose 5-phosphate site is built by Ser-209, Asn-214, Lys-215, and Glu-218. Position 218 (Glu-218) interacts with Mn(2+).

This sequence belongs to the DXR family. The cofactor is Mg(2+). Mn(2+) serves as cofactor.

It carries out the reaction 2-C-methyl-D-erythritol 4-phosphate + NADP(+) = 1-deoxy-D-xylulose 5-phosphate + NADPH + H(+). Its pathway is isoprenoid biosynthesis; isopentenyl diphosphate biosynthesis via DXP pathway; isopentenyl diphosphate from 1-deoxy-D-xylulose 5-phosphate: step 1/6. Catalyzes the NADPH-dependent rearrangement and reduction of 1-deoxy-D-xylulose-5-phosphate (DXP) to 2-C-methyl-D-erythritol 4-phosphate (MEP). In Exiguobacterium sp. (strain ATCC BAA-1283 / AT1b), this protein is 1-deoxy-D-xylulose 5-phosphate reductoisomerase.